We begin with the raw amino-acid sequence, 364 residues long: DNA polymerase IV (364 aa).

A UmuC domain is found at 6–194 (VFHIDFDYFY…LKIRDIPGIG (189 aa)). Mg(2+)-binding residues include Asp10 and Asp111. Glu112 is a catalytic residue.

It belongs to the DNA polymerase type-Y family. As to quaternary structure, monomer. Mg(2+) is required as a cofactor.

The protein resides in the cytoplasm. The catalysed reaction is DNA(n) + a 2'-deoxyribonucleoside 5'-triphosphate = DNA(n+1) + diphosphate. Poorly processive, error-prone DNA polymerase involved in untargeted mutagenesis. Copies undamaged DNA at stalled replication forks, which arise in vivo from mismatched or misaligned primer ends. These misaligned primers can be extended by PolIV. Exhibits no 3'-5' exonuclease (proofreading) activity. May be involved in translesional synthesis. This Nitrosopumilus maritimus (strain SCM1) protein is DNA polymerase IV.